Reading from the N-terminus, the 158-residue chain is MTKVTELVADVVTPLAEARGDELVDVEYVKEKKQYYLRIYVDRRPGGIDIEEIANLSELVSEKLDELDPDPFPEPYILELSSPGLERPIKNEKDWERAKGSYIHVSLYQKIDGEKTYEGTLKDLNQNQIVLEVKIKTRRKEITIPRKVIASSRFAVEF.

The protein belongs to the RimP family.

The protein localises to the cytoplasm. Its function is as follows. Required for maturation of 30S ribosomal subunits. In Lactobacillus gasseri (strain ATCC 33323 / DSM 20243 / BCRC 14619 / CIP 102991 / JCM 1131 / KCTC 3163 / NCIMB 11718 / NCTC 13722 / AM63), this protein is Ribosome maturation factor RimP.